Consider the following 224-residue polypeptide: Phosphoribosylformylglycinamidine synthase subunit PurQ (224 aa).

The region spanning 3–224 is the Glutamine amidotransferase type-1 domain; that stretch reads FGVVVFPGSN…GLLEKVVALA (222 aa). The active-site Nucleophile is the cysteine 86. Residues histidine 195 and glutamate 197 contribute to the active site.

In terms of assembly, part of the FGAM synthase complex composed of 1 PurL, 1 PurQ and 2 PurS subunits.

It localises to the cytoplasm. It catalyses the reaction N(2)-formyl-N(1)-(5-phospho-beta-D-ribosyl)glycinamide + L-glutamine + ATP + H2O = 2-formamido-N(1)-(5-O-phospho-beta-D-ribosyl)acetamidine + L-glutamate + ADP + phosphate + H(+). It carries out the reaction L-glutamine + H2O = L-glutamate + NH4(+). The protein operates within purine metabolism; IMP biosynthesis via de novo pathway; 5-amino-1-(5-phospho-D-ribosyl)imidazole from N(2)-formyl-N(1)-(5-phospho-D-ribosyl)glycinamide: step 1/2. Functionally, part of the phosphoribosylformylglycinamidine synthase complex involved in the purines biosynthetic pathway. Catalyzes the ATP-dependent conversion of formylglycinamide ribonucleotide (FGAR) and glutamine to yield formylglycinamidine ribonucleotide (FGAM) and glutamate. The FGAM synthase complex is composed of three subunits. PurQ produces an ammonia molecule by converting glutamine to glutamate. PurL transfers the ammonia molecule to FGAR to form FGAM in an ATP-dependent manner. PurS interacts with PurQ and PurL and is thought to assist in the transfer of the ammonia molecule from PurQ to PurL. The polypeptide is Phosphoribosylformylglycinamidine synthase subunit PurQ (Trichormus variabilis (strain ATCC 29413 / PCC 7937) (Anabaena variabilis)).